Reading from the N-terminus, the 337-residue chain is 5-formaminoimidazole-4-carboxamide-1-(beta)-D-ribofuranosyl 5'-monophosphate synthetase (337 aa).

5-amino-1-(5-phospho-beta-D-ribosyl)imidazole-4-carboxamide-binding residues include His14 and Ser74. The 248-residue stretch at 81 to 328 (VELVERMKVP…IAREIRLAIE (248 aa)) folds into the ATP-grasp domain. ATP is bound by residues 125 to 185 (PDDI…VPVY) and Glu207. 5-amino-1-(5-phospho-beta-D-ribosyl)imidazole-4-carboxamide is bound at residue Asn235. Residues Glu273 and Glu286 each contribute to the Mg(2+) site.

Belongs to the phosphohexose mutase family. Mg(2+) serves as cofactor. Mn(2+) is required as a cofactor.

It carries out the reaction 5-amino-1-(5-phospho-beta-D-ribosyl)imidazole-4-carboxamide + formate + ATP = 5-formamido-1-(5-phospho-D-ribosyl)imidazole-4-carboxamide + ADP + phosphate. It participates in purine metabolism; IMP biosynthesis via de novo pathway; 5-formamido-1-(5-phospho-D-ribosyl)imidazole-4-carboxamide from 5-amino-1-(5-phospho-D-ribosyl)imidazole-4-carboxamide (formate route): step 1/1. Its function is as follows. Catalyzes the ATP- and formate-dependent formylation of 5-aminoimidazole-4-carboxamide-1-beta-d-ribofuranosyl 5'-monophosphate (AICAR) to 5-formaminoimidazole-4-carboxamide-1-beta-d-ribofuranosyl 5'-monophosphate (FAICAR) in the absence of folates. The polypeptide is 5-formaminoimidazole-4-carboxamide-1-(beta)-D-ribofuranosyl 5'-monophosphate synthetase (Pyrococcus abyssi (strain GE5 / Orsay)).